Reading from the N-terminus, the 223-residue chain is Adenylate kinase (223 aa).

Position 10 to 15 (10 to 15 (GSGKGT)) interacts with ATP. Positions 30-59 (ESGAIFREHIGGGTELGKQAKAFIERGDLV) are NMP. Residues S31, R36, 57–59 (DLV), 84–87 (GFPR), and Q91 each bind AMP. The LID stretch occupies residues 125-164 (GRRLCKNDNNHPNNIFIDAIKPNGDVCRVCGGELSARSDD). Position 126 (R126) interacts with ATP. Residues R161 and R173 each coordinate AMP. Residue G209 coordinates ATP.

The protein belongs to the adenylate kinase family. In terms of assembly, monomer.

It localises to the cytoplasm. It catalyses the reaction AMP + ATP = 2 ADP. Its pathway is purine metabolism; AMP biosynthesis via salvage pathway; AMP from ADP: step 1/1. In terms of biological role, catalyzes the reversible transfer of the terminal phosphate group between ATP and AMP. Plays an important role in cellular energy homeostasis and in adenine nucleotide metabolism. The sequence is that of Adenylate kinase from Nitratidesulfovibrio vulgaris (strain ATCC 29579 / DSM 644 / CCUG 34227 / NCIMB 8303 / VKM B-1760 / Hildenborough) (Desulfovibrio vulgaris).